A 288-amino-acid chain; its full sequence is MKLQFTKMHGAGNDFVVLDGIHQKLDLTTEQWRALASRHFGVGADQMLIVEKPTREDVDFRYRIFNADGSEVEHCGNGARCFVRFVTDKGMTDKRSVRVEVMNGVITLTLQDDGQVTVDMGAPELEPARVPFRPDGLPVRTQGEDIAYGLEINGRTAWISPVSMGNPHAVQVVDDVENFPVLQDGPLIEHHATFPNRVNAGFLQVVDRHTARLRVFERGAGETLACGTGACAAVVAGIRRGLLDSPVKVHTHGGDLNIAWDGGAEPVRMTGPATTVFEGTIDLAALPA.

Positions 13, 46, and 66 each coordinate substrate. Cys-75 serves as the catalytic Proton donor. Substrate contacts are provided by residues 76–77 (GN), Asn-166, Asn-199, and 217–218 (ER). The active-site Proton acceptor is Cys-226. Position 227–228 (227–228 (GT)) interacts with substrate.

This sequence belongs to the diaminopimelate epimerase family. In terms of assembly, homodimer.

Its subcellular location is the cytoplasm. The enzyme catalyses (2S,6S)-2,6-diaminopimelate = meso-2,6-diaminopimelate. It participates in amino-acid biosynthesis; L-lysine biosynthesis via DAP pathway; DL-2,6-diaminopimelate from LL-2,6-diaminopimelate: step 1/1. Its function is as follows. Catalyzes the stereoinversion of LL-2,6-diaminopimelate (L,L-DAP) to meso-diaminopimelate (meso-DAP), a precursor of L-lysine and an essential component of the bacterial peptidoglycan. The polypeptide is Diaminopimelate epimerase (Cupriavidus pinatubonensis (strain JMP 134 / LMG 1197) (Cupriavidus necator (strain JMP 134))).